The following is a 464-amino-acid chain: Myrosinase 1 (464 aa).

Glutamine 19 contributes to the substrate binding site. Residues histidine 39 and aspartate 52 each contribute to the Zn(2+) site. Positions 122 and 166 each coordinate substrate. The active-site Nucleophile is glutamate 167. Catalysis depends on glutamate 374, which acts as the Proton donor. The N-linked (GlcNAc...) asparagine glycan is linked to asparagine 397.

As to quaternary structure, homodimer. In terms of tissue distribution, expressed in the skeletal muscle tissues surrounding the head, abdomen and thorax. Not expressed in flight muscles (at protein level).

It carries out the reaction a thioglucoside + H2O = a sugar + a thiol.. Functionally, hydrolyzes glucosinolates to a labile aglycone. This rapidly undergoes spontaneous rearrangement, eliminating sulfur to yield a number of toxic metabolites. Thereby developing a chemical defense system that exploits and mimics the host plant. In Brevicoryne brassicae (Mealy cabbage aphid), this protein is Myrosinase 1.